Here is a 249-residue protein sequence, read N- to C-terminus: UDP-N-acetyl-D-mannosaminuronic acid transferase (249 aa).

It belongs to the glycosyltransferase 26 family.

It carries out the reaction UDP-N-acetyl-alpha-D-mannosaminouronate + N-acetyl-alpha-D-glucosaminyl-di-trans,octa-cis-undecaprenyl diphosphate = beta-D-ManNAcA-(1-&gt;4)-alpha-D-GlcNAc-di-trans,octa-cis-undecaprenyl diphosphate + UDP + H(+). It functions in the pathway bacterial outer membrane biogenesis; enterobacterial common antigen biosynthesis. Functionally, catalyzes the synthesis of Und-PP-GlcNAc-ManNAcA (Lipid II), the second lipid-linked intermediate involved in enterobacterial common antigen (ECA) synthesis. The chain is UDP-N-acetyl-D-mannosaminuronic acid transferase from Pectobacterium atrosepticum (strain SCRI 1043 / ATCC BAA-672) (Erwinia carotovora subsp. atroseptica).